We begin with the raw amino-acid sequence, 612 residues long: Breast cancer type 1 susceptibility protein homolog (612 aa).

Residues 21 to 61 form an RING-type zinc finger; it reads CGICCSTYKDPILSTCFHIFCRSCINACFERKRKVQCPICR. Residues 140–173 form a disordered region; it reads RRKRPSRPQPPSAFAEEPAEPVEPPEPATKQPVE. BRCT domains lie at 415 to 477 and 505 to 603; these read RFAE…DYTI and EHGK…PYKA.

As to quaternary structure, heterodimer (via RING-type zinc finger) with brd-1 to form the core CeBCD complex. Brc-1-brd-1 heterodimer-containing CeBCD complexes bound to chromatin are activated as an E3-ubiquitin ligase in response to DNA damage. The heterodimer interacts with the recombinase rad-51 following ionizing irradiation; the interaction is direct. The heterodimer interacts the E2-ubiquitin-conjugating enzyme let-70 following ionizing irradiation. The heterodimer interacts with the pro-crossover proteins msh-5 and syp-3. Post-translationally, phosphorylation of CeBCD complexes is required for E3 ubiquitin-protein ligase activity.

The protein localises to the nucleus. Its subcellular location is the chromosome. It localises to the cytoplasm. The enzyme catalyses S-ubiquitinyl-[E2 ubiquitin-conjugating enzyme]-L-cysteine + [acceptor protein]-L-lysine = [E2 ubiquitin-conjugating enzyme]-L-cysteine + N(6)-ubiquitinyl-[acceptor protein]-L-lysine.. It participates in protein modification; protein ubiquitination. With respect to regulation, E3 ubiquitin-protein ligase activity of CeBCD complexes occurs at DNA damage sites. Following DNA damage, E3 ubiquitin-protein ligase activity is reduced by caffeine treatment (inhibitor of ATM and ATK kinase activity). In terms of biological role, E3 ubiquitin-protein ligase that specifically mediates the formation of polyubiquitin chains and plays a central role in DNA repair. Plays a role in triggering cellular responses at damage sites in response to DNA damage that may be induced by UV and ionizing radiation for example. Functions in double-strand break repair, and is required for homologous recombination between sister chromatids in meiotic and mitotic cells. In particular, protects against chromosome non-disjunction and nuclear fragmentation during meiotic double-strand break repair to ensure sister chromatid recombination and aid chromosome stability. Required for normal cell cycle progression. Along with brap-2 modulates the expression of cell cycle arrest protein cki-1 in response to increased levels of reactive oxygen species. Constituent of the CeBCD complex that possesses E3 ubiquitin-protein ligase activity. When bound to chromatin, the brc-1-brd-1 heterodimer within the CeBCD complex is inactive during normal conditions, but in response to DNA damage, the brc-1-brd-1 heterodimer associates with other proteins such as the recombinase rad-51 or the E2-ubiquitin-conjugating enzyme let-70, which activate the CeBCD complex as an E3-ubiquitin ligase. Moreover, association between the brc-1-brd-1 heterodimer and rad-51 and let-70, probably requires DNA checkpoint proteins such as atl-1 and mre-11 in order to induce ubiquitination at DNA damage sites. To this end, the brc-1-brd-1 heterodimer coordinates a diverse range of cellular pathways such as DNA damage repair, ubiquitination and transcriptional regulation to maintain genomic stability. In Caenorhabditis elegans, this protein is Breast cancer type 1 susceptibility protein homolog.